We begin with the raw amino-acid sequence, 1165 residues long: Transient receptor potential cation channel subfamily M member 5 (1165 aa).

Over M1 to A715 the chain is Cytoplasmic. At S121 the chain carries Phosphoserine. The Ca(2+) site is built by E212, C324, D333, D336, and E337. A helical membrane pass occupies residues P716–L740. Residues D741–S751 are Extracellular-facing. A helical transmembrane segment spans residues A752–Q771. 2 residues coordinate Ca(2+): E768 and Q771. The Cytoplasmic segment spans residues S772–N792. A helical membrane pass occupies residues W793–R811. Ca(2+)-binding residues include N794 and D797. The Extracellular portion of the chain corresponds to M812–E818. Residues A819–I841 form a helical membrane-spanning segment. Residues H842–I850 are Cytoplasmic-facing. Residues I851–L880 form a helical membrane-spanning segment. At L881–D889 the chain is on the extracellular side. The pore-forming intramembrane region spans W890 to I930. The Selectivity filter motif lies at F904–Q906. The Extracellular portion of the chain corresponds to L931–A942. The helical transmembrane segment at N943–Q977 threads the bilayer. At E978–H1165 the chain is on the cytoplasmic side. Residue E994 coordinates Ca(2+). A disordered region spans residues R1122–H1165. The span at A1132 to Q1141 shows a compositional bias: polar residues. Basic and acidic residues predominate over residues T1156–H1165.

Belongs to the transient receptor (TC 1.A.4) family. LTrpC subfamily. TRPM5 sub-subfamily. As to quaternary structure, homotetramer.

It is found in the cell membrane. It carries out the reaction Na(+)(in) = Na(+)(out). The enzyme catalyses K(+)(in) = K(+)(out). With respect to regulation, ca(2+)-activated cation channel. Displays voltage dependence modulation. Regulated by PI(4,5)P2 levels. PI(4,5)P 2 reverses the Ca(2+) -induced desensitization of channels. Is highly temperature-sensitive. Monovalent cation-selective ion channel activated by intracellular Ca(2+) in a voltage- and temperature-dependent manner. Mediates the transport of Na(+), K(+) and Cs(+) ions equally well. Activated directly by increase in intracellular Ca(2+), but is impermeable to it. The activation mechanism of TRPM5 involves a multistep process. TRPM5 activation involves ligand binding (i.e., tastant molecule, glucose stimulation) to Gq/G-protein coupled receptors (GPCR) and leads to the breakdown of phosphatidylinositol bisphosphate (PIP2) into diacylglycerol (DAG) and inositol trisphosphate (IP3), IP3 binds to its receptors in the endoplasmic reticulum and cause Ca(2+) release. Simultaneously with the intracellular Ca(2+) release, DAG activates the protein kinase C (PKC), which phosphorylates the TRPM5 channel. This phosphorylation combined with the bound Ca(2+), leads to a robust inward current allowing the entry of sodium ions (Na+) into the cell. This ion influx depolarizes the cell membrane, generating action potentials that propagate TRPM5 signals. The chain is Transient receptor potential cation channel subfamily M member 5 from Danio rerio (Zebrafish).